Reading from the N-terminus, the 472-residue chain is MTPRTEGMKKISRIHFVGVGGAGMSGIAEVLLNLGYRVSGSDLQQNANTRRLAERGAVISIGHEARHVETVDVVVVSSAVEQSNVEIDAARTARIPVISRAEMLAELMRFRYGVAVAGTHGKTTTTSLTASILAEGGLDPTFVIGGRLNSVGANAQLGQGEYLVAEADESDASFLHLQPMIAVVTNIDQDHMGTYGNDFGRLKDAFVEFLHHVPFYGAAVLCAEDPGVRDILPRLSKPYRTYGEREGVDIRAVGIQRLGLQSRFSVLRQGAEPLEITLNLPGYHNILNALAAIGVATELGVADAVIQRALAGFRGIGRRFQINACLNFGDGEITFVDDYGHHPSELAATLDSARNAWPDRRLVVVFQPHRYTRTRDLFEDFVQVLSRVDVLILLEVYSAGEAPIAGADGRSLSRAIRVRGQIDPIFAETPEEVFDILPNVLKPGDVVMTLGAGSVGVLAQQLPERLGSEAVP.

Residue 118-124 (GTHGKTT) participates in ATP binding.

Belongs to the MurCDEF family.

The protein localises to the cytoplasm. The enzyme catalyses UDP-N-acetyl-alpha-D-muramate + L-alanine + ATP = UDP-N-acetyl-alpha-D-muramoyl-L-alanine + ADP + phosphate + H(+). Its pathway is cell wall biogenesis; peptidoglycan biosynthesis. Its function is as follows. Cell wall formation. This Methylococcus capsulatus (strain ATCC 33009 / NCIMB 11132 / Bath) protein is UDP-N-acetylmuramate--L-alanine ligase.